The following is a 301-amino-acid chain: Transcriptional activator FeaR (301 aa).

Positions 199–299 (QKVVTLIDDN…GMTPGEYRRK (101 aa)) constitute an HTH araC/xylS-type domain. 2 DNA-binding regions (H-T-H motif) span residues 217 to 238 (EWIA…ADKG) and 266 to 289 (LAGI…KQRF).

In terms of biological role, positive regulator of tynA/maoA and feaB/padA, the genes for 2-phenylethylamine catabolism. The chain is Transcriptional activator FeaR (feaR) from Escherichia coli (strain K12).